Reading from the N-terminus, the 186-residue chain is piRNA-mediated silencing protein C19orf84 (186 aa).

2 disordered regions span residues 1–42 (MEQP…NSTD) and 89–186 (SQAG…ETEY). Positions 13–22 (NNLSLPSSGT) are enriched in polar residues. Over residues 24–36 (PWPPAPLPAPPPL) the composition is skewed to pro residues. The segment covering 114–126 (RPGWGRGLHRRGL) has biased composition (basic residues). Positions 145-157 (RTPPMTLPSPPTL) are enriched in pro residues.

Interacts with SPOCD1.

It is found in the nucleus. Its subcellular location is the nucleoplasm. Protein adapter involved in piRNA-directed transposon methylation by connecting PIWIL4-piRNA and DNA methylation machineries. The PIWIL4-piRNA pathway plays a central role during spermatogenesis by directing transposon DNA methylation and silencing, thereby preventing their mobilization, which is essential for the germline integrity. This Homo sapiens (Human) protein is piRNA-mediated silencing protein C19orf84.